We begin with the raw amino-acid sequence, 381 residues long: Homoserine O-succinyltransferase (381 aa).

One can recognise an AB hydrolase-1 domain in the interval 45–360 (NAVLVCHALN…PHGHDAFLLD (316 aa)). Ser-151 acts as the Nucleophile in catalysis. Residue Arg-221 coordinates substrate. Catalysis depends on residues Asp-321 and His-354. Asp-355 is a binding site for substrate.

The protein belongs to the AB hydrolase superfamily. MetX family. In terms of assembly, homodimer.

The protein resides in the cytoplasm. It catalyses the reaction L-homoserine + succinyl-CoA = O-succinyl-L-homoserine + CoA. Its pathway is amino-acid biosynthesis; L-methionine biosynthesis via de novo pathway; O-succinyl-L-homoserine from L-homoserine: step 1/1. In terms of biological role, transfers a succinyl group from succinyl-CoA to L-homoserine, forming succinyl-L-homoserine. The polypeptide is Homoserine O-succinyltransferase (Burkholderia ambifaria (strain MC40-6)).